Here is a 427-residue protein sequence, read N- to C-terminus: Adenylosuccinate synthetase (427 aa).

Residues 12-18 (GDEGKGK) and 40-42 (GHT) contribute to the GTP site. The Proton acceptor role is filled by Asp-13. 2 residues coordinate Mg(2+): Asp-13 and Gly-40. IMP contacts are provided by residues 13–16 (DEGK), 38–41 (NAGH), Thr-128, Arg-142, Gln-223, Thr-238, and Arg-302. His-41 (proton donor) is an active-site residue. 298 to 304 (VTTGRAR) serves as a coordination point for substrate. Residues Arg-304, 330–332 (KLD), and 412–414 (GVG) each bind GTP.

The protein belongs to the adenylosuccinate synthetase family. As to quaternary structure, homodimer. Mg(2+) is required as a cofactor.

It is found in the cytoplasm. The catalysed reaction is IMP + L-aspartate + GTP = N(6)-(1,2-dicarboxyethyl)-AMP + GDP + phosphate + 2 H(+). It functions in the pathway purine metabolism; AMP biosynthesis via de novo pathway; AMP from IMP: step 1/2. Plays an important role in the de novo pathway of purine nucleotide biosynthesis. Catalyzes the first committed step in the biosynthesis of AMP from IMP. The polypeptide is Adenylosuccinate synthetase (Frankia casuarinae (strain DSM 45818 / CECT 9043 / HFP020203 / CcI3)).